A 179-amino-acid polypeptide reads, in one-letter code: Large ribosomal subunit protein uL5 (179 aa).

The protein belongs to the universal ribosomal protein uL5 family. In terms of assembly, part of the 50S ribosomal subunit; part of the 5S rRNA/L5/L18/L25 subcomplex. Contacts the 5S rRNA and the P site tRNA. Forms a bridge to the 30S subunit in the 70S ribosome.

Its function is as follows. This is one of the proteins that bind and probably mediate the attachment of the 5S RNA into the large ribosomal subunit, where it forms part of the central protuberance. In the 70S ribosome it contacts protein S13 of the 30S subunit (bridge B1b), connecting the 2 subunits; this bridge is implicated in subunit movement. Contacts the P site tRNA; the 5S rRNA and some of its associated proteins might help stabilize positioning of ribosome-bound tRNAs. The chain is Large ribosomal subunit protein uL5 from Deinococcus geothermalis (strain DSM 11300 / CIP 105573 / AG-3a).